A 205-amino-acid chain; its full sequence is MSSCSRTRLSRALGVPLTPKAARLMEVRPYPPGQHGRFRRKGDSDYAVRLREKQRLRGQYGLREKQLASVYHEARRVKGLAGENLVEMLEMRLDALVLRAAFARSISQARQLVVHRHILVDGKLVDRPSYSVSPGQTVKVKPKSVPLDPFQVAASGGHADVLPPIPGYIEADLEGLSFRLVRRPKRSEVPVTCNVQLVVEYYAAR.

One can recognise an S4 RNA-binding domain in the interval 91–149 (MRLDALVLRAAFARSISQARQLVVHRHILVDGKLVDRPSYSVSPGQTVKVKPKSVPLDP).

This sequence belongs to the universal ribosomal protein uS4 family. In terms of assembly, part of the 30S ribosomal subunit. Contacts protein S5. The interaction surface between S4 and S5 is involved in control of translational fidelity.

One of the primary rRNA binding proteins, it binds directly to 16S rRNA where it nucleates assembly of the body of the 30S subunit. Its function is as follows. With S5 and S12 plays an important role in translational accuracy. The protein is Small ribosomal subunit protein uS4 of Tropheryma whipplei (strain TW08/27) (Whipple's bacillus).